The primary structure comprises 1185 residues: DNA-directed RNA polymerase subunit beta' (1185 aa).

The Zn(2+) site is built by Cys60, Cys62, Cys75, and Cys78. Mg(2+) contacts are provided by Asp449, Asp451, and Asp453. The Zn(2+) site is built by Cys774, Cys853, Cys860, and Cys863.

It belongs to the RNA polymerase beta' chain family. The RNAP catalytic core consists of 2 alpha, 1 beta, 1 beta' and 1 omega subunit. When a sigma factor is associated with the core the holoenzyme is formed, which can initiate transcription. Mg(2+) is required as a cofactor. The cofactor is Zn(2+).

It carries out the reaction RNA(n) + a ribonucleoside 5'-triphosphate = RNA(n+1) + diphosphate. DNA-dependent RNA polymerase catalyzes the transcription of DNA into RNA using the four ribonucleoside triphosphates as substrates. The protein is DNA-directed RNA polymerase subunit beta' of Desulforamulus reducens (strain ATCC BAA-1160 / DSM 100696 / MI-1) (Desulfotomaculum reducens).